Reading from the N-terminus, the 321-residue chain is Large ribosomal subunit protein uL3 (321 aa).

It belongs to the universal ribosomal protein uL3 family. As to quaternary structure, part of the 50S ribosomal subunit. Forms a cluster with proteins L14 and L24e.

In terms of biological role, one of the primary rRNA binding proteins, it binds directly near the 3'-end of the 23S rRNA, where it nucleates assembly of the 50S subunit. This is Large ribosomal subunit protein uL3 from Nanoarchaeum equitans (strain Kin4-M).